We begin with the raw amino-acid sequence, 360 residues long: tRNA (guanine(37)-N(1))-methyltransferase (360 aa).

S-adenosyl-L-methionine-binding positions include Arg-197, 235–236 (DL), and Asn-283.

It belongs to the class I-like SAM-binding methyltransferase superfamily. TRM5/TYW2 family. Monomer.

It localises to the mitochondrion matrix. It is found in the nucleus. The protein resides in the cytoplasm. It catalyses the reaction guanosine(37) in tRNA + S-adenosyl-L-methionine = N(1)-methylguanosine(37) in tRNA + S-adenosyl-L-homocysteine + H(+). Functionally, specifically methylates the N1 position of guanosine-37 in various cytoplasmic and mitochondrial tRNAs. Methylation is not dependent on the nature of the nucleoside 5' of the target nucleoside. This is the first step in the biosynthesis of wybutosine (yW), a modified base adjacent to the anticodon of tRNAs and required for accurate decoding. The sequence is that of tRNA (guanine(37)-N(1))-methyltransferase from Encephalitozoon cuniculi (strain GB-M1) (Microsporidian parasite).